A 433-amino-acid polypeptide reads, in one-letter code: Steroid hormone receptor ERR2 (433 aa).

The segment at 1-38 (MSSDDRHLGSSCGSFIKTEPSSPSSGIDALSHHSPSGS) is disordered. The segment covering 28-38 (DALSHHSPSGS) has biased composition (low complexity). Residues 93–211 (YMLNAIPKRL…SPPAKKPLTK (119 aa)) are interaction with NANOG. The nuclear receptor DNA-binding region spans 100–186 (KRLCLVCGDI…RVRGGRQKYK (87 aa)). NR C4-type zinc fingers lie at residues 103–123 (CLVCGDIASGYHYGVASCEAC) and 139–163 (CPATNECEITKRRRKSCQACRFMKC). The tract at residues 203 to 433 (PPAKKPLTKI…LFLEMLEAKV (231 aa)) is essential for ESRRB transcriptional activity and interaction with NCOA3. Residues 208 to 432 (PLTKIVSYLL…KLFLEMLEAK (225 aa)) enclose the NR LBD domain.

The protein belongs to the nuclear hormone receptor family. NR3 subfamily. Binds DNA as a monomer. Interacts with NR0B1; represses ESRRB activity at the GATA6 promoter. Interacts with NANOG; reciprocally modulates their transcriptional activities and activates POU5F1 expression. Interacts with NCOA3; mediates the interaction between ESRRB and RNA polymerase II complexes and allows NCOA3 corecruitment to ESRRB, KLF4, NANOG, and SOX2 enhancer regions to trigger ESRRB-dependent gene activation involved in self-renewal and pluripotency. Interacts with KDM1A; co-occupes the core set of ESRRB targets including ELF5 and EOMES. Interacts with the multiprotein complex Integrator, at least composed of INTS1, INTS2, INTS3, INTS4, INTS5, INTS6, INTS7, INTS8, INTS9/RC74, INTS10, INTS11/CPSF3L and INTS12; ESRRB is probably not a core component of the integrator complex and associates to integrator via its interaction with INTS1 and INTS9; attracts the transcriptional machinery. Interacts with JARID2. Interacts with POU5F1; recruits ESRRB near the POU5F1-SOX2 element in the NANOG proximal promoter leading to activation of NANOG expression; the interaction is DNA independent. Interacts with NFE2L2; represses NFE2L2 transcriptional activity. Isoform 1 interacts with ESR1. In terms of processing, acetylated by PCAF/KAT2 (in vitro).

The protein localises to the nucleus. Its subcellular location is the cytoplasm. It localises to the chromosome. In terms of biological role, transcription factor that binds a canonical ESRRB recognition (ERRE) sequence 5'TCAAGGTCA-3' localized on promoter and enhancer of targets genes regulating their expression or their transcription activity. Plays a role, in a LIF-independent manner, in maintainance of self-renewal and pluripotency of embryonic and trophoblast stem cells through different signaling pathways including FGF signaling pathway and Wnt signaling pathways. Involved in morula development (2-16 cells embryos) by acting as a regulator at the 8-cell stage. Upon FGF signaling pathway activation, interacts with KDM1A by directly binding to enhancer site of ELF5 and EOMES and activating their transcription leading to self-renewal of trophoblast stem cells. Also regulates expression of multiple rod-specific genes and is required for survival of this cell type. Plays a role as transcription factor activator of GATA6, NR0B1, POU5F1 and PERM1. Plays a role as transcription factor repressor of NFE2L2 transcriptional activity and ESR1 transcriptional activity. During mitosis remains bound to a subset of interphase target genes, including pluripotency regulators, through the canonical ESRRB recognition (ERRE) sequence, leading to their transcriptional activation in early G1 phase. Can coassemble on structured DNA elements with other transcription factors like SOX2, POU5F1, KDM1A and NCOA3 to trigger ESRRB-dependent gene activation. This mechanism, in the case of SOX2 corecruitment prevents the embryonic stem cells (ESCs) to epiblast stem cells (EpiSC) transition through positive regulation of NR0B1 that inhibits the EpiSC transcriptional program. Also plays a role inner ear development by controlling expression of ion channels and transporters and in early placentation. Functionally, transcription factor that binds a canonical ESRRB recognition (ERRE) sequence 5'TCAAGGTCA-3' localized on promoter and enhancer of targets genes regulating their expression or their transcription activity. Positively regulates ESR1 transcriptional activity upon E2 stimulation. This Homo sapiens (Human) protein is Steroid hormone receptor ERR2.